A 120-amino-acid polypeptide reads, in one-letter code: Putative defensin-like protein 179 (120 aa).

Residues 1–27 form the signal peptide; that stretch reads MERTSTSLLFLLSLLIIFASAVNQIRA. 7 disulfides stabilise this stretch: Cys-37–Cys-56, Cys-40–Cys-63, Cys-44–Cys-65, Cys-74–Cys-120, Cys-85–Cys-105, Cys-90–Cys-114, and Cys-94–Cys-116.

Belongs to the DEFL family.

It localises to the secreted. The protein is Putative defensin-like protein 179 (LCR57) of Arabidopsis thaliana (Mouse-ear cress).